Here is a 335-residue protein sequence, read N- to C-terminus: Glycerol-3-phosphate dehydrogenase [NAD(P)+] (335 aa).

Residues W12 and K106 each coordinate NADPH. The sn-glycerol 3-phosphate site is built by K106, G136, and S138. A140 provides a ligand contact to NADPH. 5 residues coordinate sn-glycerol 3-phosphate: K191, D244, S254, R255, and N256. K191 acts as the Proton acceptor in catalysis. Residue R255 participates in NADPH binding. Residues V279 and E281 each coordinate NADPH.

The protein belongs to the NAD-dependent glycerol-3-phosphate dehydrogenase family.

It is found in the cytoplasm. The enzyme catalyses sn-glycerol 3-phosphate + NAD(+) = dihydroxyacetone phosphate + NADH + H(+). It carries out the reaction sn-glycerol 3-phosphate + NADP(+) = dihydroxyacetone phosphate + NADPH + H(+). Its pathway is membrane lipid metabolism; glycerophospholipid metabolism. Functionally, catalyzes the reduction of the glycolytic intermediate dihydroxyacetone phosphate (DHAP) to sn-glycerol 3-phosphate (G3P), the key precursor for phospholipid synthesis. The sequence is that of Glycerol-3-phosphate dehydrogenase [NAD(P)+] from Fusobacterium nucleatum subsp. nucleatum (strain ATCC 25586 / DSM 15643 / BCRC 10681 / CIP 101130 / JCM 8532 / KCTC 2640 / LMG 13131 / VPI 4355).